The following is a 317-amino-acid chain: Transcriptional regulator LsrR (317 aa).

The H-T-H motif DNA-binding region spans 33-56 (QSEISDRLGLTRLKVSRLLEKGHQ).

This sequence belongs to the SorC transcriptional regulatory family.

It is found in the cytoplasm. Its activity is regulated as follows. Inactivated by phosphorylated autoinducer-2 (phospho-AI-2). Phospho-AI-2 acts by binding to LsrR, which is then unable to bind to the promoter regions, allowing the transcription of the target genes. Transcriptional regulator that represses the expression of the lsr operon in the absence of the quorum-sensing signaling molecule autoinducer 2 (AI-2). It also represses the expression of the lsrRK operon. Acts by binding directly to the lsrA and lsrR promoter regions. In the presence of phosphorylated autoinducer-2 (phospho-AI-2), LsrR is inactivated, leading to the transcription of the genes. The polypeptide is Transcriptional regulator LsrR (lsrR) (Escherichia coli O139:H28 (strain E24377A / ETEC)).